Here is a 462-residue protein sequence, read N- to C-terminus: Glycine--tRNA ligase (462 aa).

The substrate site is built by R98 and E174. Residues 206-208 (RNE), 216-221 (FRTREF), 290-291 (EL), and 334-337 (GADR) each bind ATP. 221 to 225 (FEQME) is a binding site for substrate. Residue 330-334 (EPSLG) participates in substrate binding.

This sequence belongs to the class-II aminoacyl-tRNA synthetase family. Homodimer.

The protein resides in the cytoplasm. It catalyses the reaction tRNA(Gly) + glycine + ATP = glycyl-tRNA(Gly) + AMP + diphosphate. In terms of biological role, catalyzes the attachment of glycine to tRNA(Gly). The polypeptide is Glycine--tRNA ligase (Lachnospira eligens (strain ATCC 27750 / DSM 3376 / VPI C15-48 / C15-B4) (Eubacterium eligens)).